We begin with the raw amino-acid sequence, 259 residues long: DNA repair protein RecO (259 aa).

This sequence belongs to the RecO family.

Functionally, involved in DNA repair and RecF pathway recombination. The polypeptide is DNA repair protein RecO (Syntrophus aciditrophicus (strain SB)).